Reading from the N-terminus, the 121-residue chain is Small ribosomal subunit protein uS13 (121 aa).

The segment at 96–121 (PVRGQNTKNNARTRKGKAVAIAGKKK) is disordered. Residues 106–121 (ARTRKGKAVAIAGKKK) show a composition bias toward basic residues.

Belongs to the universal ribosomal protein uS13 family. As to quaternary structure, part of the 30S ribosomal subunit. Forms a loose heterodimer with protein S19. Forms two bridges to the 50S subunit in the 70S ribosome.

In terms of biological role, located at the top of the head of the 30S subunit, it contacts several helices of the 16S rRNA. In the 70S ribosome it contacts the 23S rRNA (bridge B1a) and protein L5 of the 50S subunit (bridge B1b), connecting the 2 subunits; these bridges are implicated in subunit movement. Contacts the tRNAs in the A and P-sites. The sequence is that of Small ribosomal subunit protein uS13 from Streptococcus suis (strain 05ZYH33).